The following is a 364-amino-acid chain: Probable UDP-arabinopyranose mutase 4 (364 aa).

The DXD motif signature appears at 106–108; the sequence is DDD. N-linked (Glc...) arginine glycosylation is present at Arg154.

Belongs to the RGP family. In terms of assembly, heteromers with RGP1 and RGP2. It depends on Mn(2+) as a cofactor. Mg(2+) serves as cofactor. Post-translationally, reversibly glycosylated in vitro by UDP-glucose, UDP-xylose and UDP-galactose, but not UDP-mannose. Specifically expressed in developing seeds.

The protein localises to the cytoplasm. The protein resides in the cytosol. It localises to the golgi apparatus. It carries out the reaction UDP-beta-L-arabinofuranose = UDP-beta-L-arabinopyranose. Its function is as follows. Probable UDP-L-arabinose mutase involved in the biosynthesis of cell wall non-cellulosic polysaccharides. In Arabidopsis thaliana (Mouse-ear cress), this protein is Probable UDP-arabinopyranose mutase 4.